We begin with the raw amino-acid sequence, 317 residues long: 2,3-dihydroxyphenylpropionate/2,3-dihydroxicinnamic acid 1,2-dioxygenase (317 aa).

His115 (proton donor) is an active-site residue. The active-site Proton acceptor is His179.

Belongs to the LigB/MhpB extradiol dioxygenase family. In terms of assembly, homotetramer. Fe(2+) is required as a cofactor.

It catalyses the reaction 3-(2,3-dihydroxyphenyl)propanoate + O2 = (2Z,4E)-2-hydroxy-6-oxonona-2,4-dienedioate + H(+). The enzyme catalyses (2E)-3-(2,3-dihydroxyphenyl)prop-2-enoate + O2 = (2Z,4E,7E)-2-hydroxy-6-oxonona-2,4,7-trienedioate + H(+). It functions in the pathway aromatic compound metabolism; 3-phenylpropanoate degradation. Its function is as follows. Catalyzes the non-heme iron(II)-dependent oxidative cleavage of 2,3-dihydroxyphenylpropionic acid and 2,3-dihydroxicinnamic acid into 2-hydroxy-6-ketononadienedioate and 2-hydroxy-6-ketononatrienedioate, respectively. The protein is 2,3-dihydroxyphenylpropionate/2,3-dihydroxicinnamic acid 1,2-dioxygenase of Burkholderia vietnamiensis (strain G4 / LMG 22486) (Burkholderia cepacia (strain R1808)).